The following is a 246-amino-acid chain: Protein lin-37 homolog (246 aa).

M1 is subject to N-acetylmethionine. Glycyl lysine isopeptide (Lys-Gly) (interchain with G-Cter in SUMO2) cross-links involve residues K5 and K7. Residues 36 to 55 (DRERLDEEPGKTSLDTHNKD) show a composition bias toward basic and acidic residues. Disordered regions lie at residues 36–90 (DRER…GGPQ) and 127–209 (PTVR…LIYR). Phosphoserine occurs at positions 135 and 138. Residues 163–172 (LPPPTAPGPP) are compositionally biased toward pro residues. T167 carries the post-translational modification Phosphothreonine. A phosphoserine mark is found at S182 and S202.

Component of the DREAM complex (also named LINC complex) at least composed of E2F4, E2F5, LIN9, LIN37, LIN52, LIN54, MYBL1, MYBL2, RBL1, RBL2, RBBP4, TFDP1 and TFDP2. The complex exists in quiescent cells where it represses cell cycle-dependent genes. It dissociates in S phase when LIN9, LIN37, LIN52 and LIN54 form a subcomplex that binds to MYBL2.

The protein is Protein lin-37 homolog (LIN37) of Bos taurus (Bovine).